Here is a 691-residue protein sequence, read N- to C-terminus: DNA ligase (691 aa).

Residues Asp-41–Asp-45, Ser-90–Leu-91, and Glu-130 each bind NAD(+). The active-site N6-AMP-lysine intermediate is the Lys-132. NAD(+) is bound by residues Arg-153, Glu-190, Lys-307, and Lys-331. The Zn(2+) site is built by Cys-425, Cys-428, Cys-443, and Cys-449. Positions Ala-610 to Arg-691 constitute a BRCT domain.

It belongs to the NAD-dependent DNA ligase family. LigA subfamily. Requires Mg(2+) as cofactor. Mn(2+) serves as cofactor.

It catalyses the reaction NAD(+) + (deoxyribonucleotide)n-3'-hydroxyl + 5'-phospho-(deoxyribonucleotide)m = (deoxyribonucleotide)n+m + AMP + beta-nicotinamide D-nucleotide.. Functionally, DNA ligase that catalyzes the formation of phosphodiester linkages between 5'-phosphoryl and 3'-hydroxyl groups in double-stranded DNA using NAD as a coenzyme and as the energy source for the reaction. It is essential for DNA replication and repair of damaged DNA. The protein is DNA ligase of Burkholderia mallei (strain NCTC 10247).